The primary structure comprises 210 residues: Large ribosomal subunit protein uL3 (210 aa).

Positions 119 to 151 (FQGAIKRHGQSRGPMSHGSRYHRRPGSMGPVAP) are disordered.

It belongs to the universal ribosomal protein uL3 family. Part of the 50S ribosomal subunit. Forms a cluster with proteins L14 and L19.

In terms of biological role, one of the primary rRNA binding proteins, it binds directly near the 3'-end of the 23S rRNA, where it nucleates assembly of the 50S subunit. The protein is Large ribosomal subunit protein uL3 of Bacillus cytotoxicus (strain DSM 22905 / CIP 110041 / 391-98 / NVH 391-98).